The sequence spans 538 residues: Phosphoenolpyruvate carboxykinase (ATP) (538 aa).

Substrate contacts are provided by arginine 64, tyrosine 205, and lysine 211. Residues lysine 211, histidine 230, and 246 to 254 contribute to the ATP site; that span reads GLSGTGKTT. Mn(2+)-binding residues include lysine 211 and histidine 230. Aspartate 267 lines the Mn(2+) pocket. ATP is bound by residues glutamate 295, arginine 331, 447 to 448, and threonine 453; that span reads RI. Arginine 331 contacts substrate.

Belongs to the phosphoenolpyruvate carboxykinase (ATP) family. In terms of assembly, monomer. The cofactor is Mn(2+).

It localises to the cytoplasm. The enzyme catalyses oxaloacetate + ATP = phosphoenolpyruvate + ADP + CO2. It functions in the pathway carbohydrate biosynthesis; gluconeogenesis. In terms of biological role, involved in the gluconeogenesis. Catalyzes the conversion of oxaloacetate (OAA) to phosphoenolpyruvate (PEP) through direct phosphoryl transfer between the nucleoside triphosphate and OAA. This is Phosphoenolpyruvate carboxykinase (ATP) from Haemophilus influenzae (strain ATCC 51907 / DSM 11121 / KW20 / Rd).